Consider the following 358-residue polypeptide: Short chain dehydrogenase sor7 (358 aa).

Positions 1-22 (MSSPAIGQPPIPPTPTDANISG) are disordered. Residues leucine 34, aspartate 88, asparagine 115, tyrosine 206, lysine 210, valine 238, and threonine 240 each coordinate NADP(+). The active-site Proton donor is tyrosine 206. The Lowers pKa of active site Tyr role is filled by lysine 210.

The protein belongs to the short-chain dehydrogenases/reductases (SDR) family.

It functions in the pathway secondary metabolite biosynthesis. In terms of biological role, short chain dehydrogenase; part of the SOR gene cluster that mediates the biosynthesis of sorbicillinoids, a diverse group of yellow secondary metabolites that restrict growth of competing pathogenic fungi but not of bacteria. Sorbicillinoids biosynthesis requires the action of two PKSs. The SOR cluster is required for the production of trichodimerol and dihydrotrichotetronin, with sor2 being sufficient for production of trichodimerol, but not dihydrotrichotetronin in the light. Sor1 iteratively combines three acetyl units and the growing chain is modified by the ketoacyl reductase subunit, and optional by the enoyl reductase subunit in the second cycle. The polyketide is then handed over to the PKS sor2, which adds three more acetyl units, and two methyl groups. Sor2 releases an aldehyde, which undergoes spontaneous cyclization resulting in the formation of sorbicillin or 2',3'-dihydrosorbicillin. The monooxygenase sor5 oxidizes sorbicillin and 2',3'-dihydrosorbicillin to 2',3'-dihydrosorbicillinol and sorbicillinol, respectively. The oxidoreductase sor8 further converts sorbicillinol into oxosorbicillinol. Sorbicillinol is the building block for the other sorbicillinoids such as disorbicillinol, bisvertinolon, dihydrobisvertinolone, and dihydrotrichotetronine. The chain is Short chain dehydrogenase sor7 from Hypocrea jecorina (strain QM6a) (Trichoderma reesei).